The chain runs to 288 residues: Formamidopyrimidine-DNA glycosylase (288 aa).

Pro-2 serves as the catalytic Schiff-base intermediate with DNA. The active-site Proton donor is Glu-3. Lys-59 acts as the Proton donor; for beta-elimination activity in catalysis. The DNA site is built by His-93, Arg-112, and Lys-168. The FPG-type zinc-finger motif lies at 254-288 (NVYGRGGEPCKRCGAPIKRVVVGGRSTHYCATCQR). Arg-278 (proton donor; for delta-elimination activity) is an active-site residue.

The protein belongs to the FPG family. As to quaternary structure, monomer. Zn(2+) serves as cofactor.

The catalysed reaction is Hydrolysis of DNA containing ring-opened 7-methylguanine residues, releasing 2,6-diamino-4-hydroxy-5-(N-methyl)formamidopyrimidine.. The enzyme catalyses 2'-deoxyribonucleotide-(2'-deoxyribose 5'-phosphate)-2'-deoxyribonucleotide-DNA = a 3'-end 2'-deoxyribonucleotide-(2,3-dehydro-2,3-deoxyribose 5'-phosphate)-DNA + a 5'-end 5'-phospho-2'-deoxyribonucleoside-DNA + H(+). Its function is as follows. Involved in base excision repair of DNA damaged by oxidation or by mutagenic agents. Acts as a DNA glycosylase that recognizes and removes damaged bases. Has a preference for oxidized purines, such as 7,8-dihydro-8-oxoguanine (8-oxoG). Has AP (apurinic/apyrimidinic) lyase activity and introduces nicks in the DNA strand. Cleaves the DNA backbone by beta-delta elimination to generate a single-strand break at the site of the removed base with both 3'- and 5'-phosphates. The protein is Formamidopyrimidine-DNA glycosylase of Corynebacterium jeikeium (strain K411).